A 234-amino-acid polypeptide reads, in one-letter code: Proteasome subunit alpha type-6 (234 aa).

S14 carries the phosphoserine modification. A Glycyl lysine isopeptide (Lys-Gly) (interchain with G-Cter in ubiquitin) cross-link involves residue K191.

It belongs to the peptidase T1A family. In terms of assembly, the 26S proteasome consists of a 20S proteasome core and two 19S regulatory subunits. The 20S proteasome core is composed of 28 subunits that are arranged in four stacked rings, resulting in a barrel-shaped structure. The two end rings are each formed by seven alpha subunits, and the two central rings are each formed by seven beta subunits. The catalytic chamber with the active sites is on the inside of the barrel.

The protein resides in the cytoplasm. It localises to the nucleus. In terms of biological role, the proteasome degrades poly-ubiquitinated proteins in the cytoplasm and in the nucleus. It is essential for the regulated turnover of proteins and for the removal of misfolded proteins. The proteasome is a multicatalytic proteinase complex that is characterized by its ability to cleave peptides with Arg, Phe, Tyr, Leu, and Glu adjacent to the leaving group at neutral or slightly basic pH. It has an ATP-dependent proteolytic activity. This chain is Proteasome subunit alpha type-6 (PRE5), found in Saccharomyces cerevisiae (strain ATCC 204508 / S288c) (Baker's yeast).